We begin with the raw amino-acid sequence, 89 residues long: uncharacterized protein (89 aa).

A topological domain (cytoplasmic) is located at residue Met1. The chain crosses the membrane as a helical span at residues 2-22 (LFEIIYIVSSLFYIVSIIYTL). Residues 23–89 (MRIKHINTVA…ELKKSKLCEG (67 aa)) are Extracellular-facing.

The protein resides in the host membrane. This is an uncharacterized protein from Sulfolobus islandicus filamentous virus (isolate Iceland/Hveragerdi) (SIFV).